A 327-amino-acid chain; its full sequence is Protein UL95 homolog (327 aa).

This sequence belongs to the herpesviridae UL95 family. Interacts with ORF24; this interaction may serve as a core scaffold for the assembly of the viral transcription initiation complex. Interacts with ORF66. Interacts with ORF18. Interacts with ORF23. Interacts with ORF31. Interacts with host EPAS1; this interaction stabilizes host EPAS1, ensuring its transcriptional activity.

Its subcellular location is the host nucleus. Functionally, participates in the expression of late viral mRNAs in part by interacting with ORF24. Expressed before viral DNA replication, assembles at the viral pre-replication complexes (pre-RCs) and thus serves as a hub for recruiting a viral transcription complex to ORF24 to promote late viral gene expression. Also plays a regulatory role in the viral life cycle by regulating host transcriptional regulators HIF1A and EPAS1. The chain is Protein UL95 homolog (ORF34) from Homo sapiens (Human).